The chain runs to 305 residues: MDDKELIEYFKSQMKEDPDMASAVAAIRTLLEFLKRDKGETIQGLRANLTSAIETLCGVDSSVAVSSGGELFLRFISLTSLEYSDYSKCKKIMIERGELFLRRISLSRNKIADLCHTFIKDGATILTHAYSRVVLRVLEAAVAAKKRFSVYVTESQPDLSGKKMAKALCHLNVPVTVVLDAAVGYIMEKADLVIVGAEGVVENGGIINKIGTNQMAVCAKAQNKPFYAVAESFKFVRLFPLNQQDVPDKFKYKADTLKVAQTGQDLKEEHPWVDYTAPSLITLLFTDLGVLTPSAVSDELIKLYL.

Lys35 bears the N6-acetyllysine mark.

This sequence belongs to the eIF-2B alpha/beta/delta subunits family. In terms of assembly, component of the translation initiation factor 2B (eIF2B) complex which is a heterodecamer of two sets of five different subunits: alpha, beta, gamma, delta and epsilon. Subunits alpha, beta and delta comprise a regulatory subcomplex and subunits epsilon and gamma comprise a catalytic subcomplex. Within the complex, the hexameric regulatory complex resides at the center, with the two heterodimeric catalytic subcomplexes bound on opposite sides.

It localises to the cytoplasm. It is found in the cytosol. Activated by the chemical integrated stress response (ISR) inhibitor ISRIB which stimulates guanine nucleotide exchange factor activity for both phosphorylated and unphosphorylated eIF2. Its function is as follows. Acts as a component of the translation initiation factor 2B (eIF2B) complex, which catalyzes the exchange of GDP for GTP on eukaryotic initiation factor 2 (eIF2) gamma subunit. Its guanine nucleotide exchange factor activity is repressed when bound to eIF2 complex phosphorylated on the alpha subunit, thereby limiting the amount of methionyl-initiator methionine tRNA available to the ribosome and consequently global translation is repressed. This chain is Translation initiation factor eIF2B subunit alpha (EIF2B1), found in Macaca fascicularis (Crab-eating macaque).